Here is a 173-residue protein sequence, read N- to C-terminus: Large ribosomal subunit protein uL10 (173 aa).

This sequence belongs to the universal ribosomal protein uL10 family. In terms of assembly, part of the ribosomal stalk of the 50S ribosomal subunit. The N-terminus interacts with L11 and the large rRNA to form the base of the stalk. The C-terminus forms an elongated spine to which L12 dimers bind in a sequential fashion forming a multimeric L10(L12)X complex.

Its function is as follows. Forms part of the ribosomal stalk, playing a central role in the interaction of the ribosome with GTP-bound translation factors. The sequence is that of Large ribosomal subunit protein uL10 (rplJ) from Synechocystis sp. (strain ATCC 27184 / PCC 6803 / Kazusa).